The chain runs to 84 residues: Large ribosomal subunit protein bL27 (84 aa).

The disordered stretch occupies residues 1–21 (MAHKKGASSTRNGRDSNAQRL). Residues 7–19 (ASSTRNGRDSNAQ) show a composition bias toward polar residues.

This sequence belongs to the bacterial ribosomal protein bL27 family.

In Clavibacter michiganensis subsp. michiganensis (strain NCPPB 382), this protein is Large ribosomal subunit protein bL27.